Reading from the N-terminus, the 205-residue chain is Ribosome maturation factor RimP (205 aa).

Over residues 1 to 12 (MSNAEAQASSDH) the composition is skewed to polar residues. Disordered stretches follow at residues 1 to 24 (MSNAEAQASSDHTAPGKADTAPAH) and 186 to 205 (FSHLSEDGLEPEHNGPSEEA).

It belongs to the RimP family.

The protein resides in the cytoplasm. In terms of biological role, required for maturation of 30S ribosomal subunits. The protein is Ribosome maturation factor RimP of Pseudarthrobacter chlorophenolicus (strain ATCC 700700 / DSM 12829 / CIP 107037 / JCM 12360 / KCTC 9906 / NCIMB 13794 / A6) (Arthrobacter chlorophenolicus).